We begin with the raw amino-acid sequence, 36 residues long: Pancreatic polypeptide (36 aa).

Y36 carries the post-translational modification Tyrosine amide.

This sequence belongs to the NPY family.

Its subcellular location is the secreted. Its function is as follows. Hormone secreted by pancreatic cells that acts as a regulator of pancreatic and gastrointestinal functions probably by signaling through the G protein-coupled receptor NPY4R2. The sequence is that of Pancreatic polypeptide (PPY) from Erinaceus europaeus (Western European hedgehog).